A 399-amino-acid polypeptide reads, in one-letter code: Chorismate synthase (399 aa).

Positions 40 and 46 each coordinate NADP(+). FMN-binding positions include 135–137 (RAS), 256–257 (QA), G301, 316–320 (KPIAT), and R342.

This sequence belongs to the chorismate synthase family. In terms of assembly, homotetramer. FMNH2 is required as a cofactor.

It catalyses the reaction 5-O-(1-carboxyvinyl)-3-phosphoshikimate = chorismate + phosphate. It functions in the pathway metabolic intermediate biosynthesis; chorismate biosynthesis; chorismate from D-erythrose 4-phosphate and phosphoenolpyruvate: step 7/7. Functionally, catalyzes the anti-1,4-elimination of the C-3 phosphate and the C-6 proR hydrogen from 5-enolpyruvylshikimate-3-phosphate (EPSP) to yield chorismate, which is the branch point compound that serves as the starting substrate for the three terminal pathways of aromatic amino acid biosynthesis. This reaction introduces a second double bond into the aromatic ring system. The chain is Chorismate synthase from Pseudarthrobacter chlorophenolicus (strain ATCC 700700 / DSM 12829 / CIP 107037 / JCM 12360 / KCTC 9906 / NCIMB 13794 / A6) (Arthrobacter chlorophenolicus).